A 343-amino-acid polypeptide reads, in one-letter code: MKIKALSKLKPEEGIWLTEVEKPEMGHNDLLIRIKKTAICGTDVHIYNWDEWSQKTIPVPMVVGHEYVGEVVGIGQEVRGFEIGDRVSGEGHITCGHCRNCRGGRTHLCRNTTGVGVNRTGAFSEYLVIPAFNAFKIPAGISDDLASIFDPFGNAVHTALSFDLVGEDVLITGAGPIGIMAAAVAKHVGARHVVITDVNEYRLDLAKKMGVTRAVNVMNEKLEDVMSELGMTEGFDVGLEMSGNPSAFNSMLTNMNHGGKISLLGIPPSDMTVDWNQVIFKGLVIKGIYGREMFETWYKMASLIQSGLDLTPIITHHYKIDDFQAGFDMMRSGMSGKVILDWE.

Cys-40 is a Zn(2+) binding site. Catalysis depends on charge relay system residues Thr-42 and His-45. Zn(2+) is bound by residues His-65, Glu-66, Cys-95, Cys-98, Cys-101, and Cys-109. Residues Ile-177, Asp-197, Arg-202, 264-266 (LGI), and 288-289 (IY) each bind NAD(+).

It belongs to the zinc-containing alcohol dehydrogenase family. As to quaternary structure, homotetramer. Requires Zn(2+) as cofactor.

The protein localises to the cytoplasm. The enzyme catalyses L-threonine + NAD(+) = (2S)-2-amino-3-oxobutanoate + NADH + H(+). It participates in amino-acid degradation; L-threonine degradation via oxydo-reductase pathway; glycine from L-threonine: step 1/2. Functionally, catalyzes the NAD(+)-dependent oxidation of L-threonine to 2-amino-3-ketobutyrate. This Aliivibrio fischeri (strain ATCC 700601 / ES114) (Vibrio fischeri) protein is L-threonine 3-dehydrogenase.